We begin with the raw amino-acid sequence, 45 residues long: Mu-conotoxin-like Cal 12.1.2e (45 aa).

Disulfide bonds link cysteine 3–cysteine 16, cysteine 11–cysteine 28, cysteine 18–cysteine 33, and cysteine 27–cysteine 39. Tryptophan 17 carries the 6'-bromotryptophan modification. The residue at position 23 (proline 23) is a 4-hydroxyproline. Tryptophan 38 carries the post-translational modification 6'-bromotryptophan. Proline 40 is modified (4-hydroxyproline).

In terms of tissue distribution, expressed by the venom duct.

The protein localises to the secreted. In terms of biological role, mu-conotoxins block voltage-gated sodium channels. This toxin reversibly blocks voltage-gated sodium channel in cephalopods, with no alteration in the voltage dependence of sodium conductance or on the kinetics of inactivation. In Californiconus californicus (California cone), this protein is Mu-conotoxin-like Cal 12.1.2e.